Reading from the N-terminus, the 420-residue chain is Protein MucB (420 aa).

Residues 2–187 (FALIDVNGMY…LPVAEVWGVG (186 aa)) enclose the UmuC domain.

Belongs to the DNA polymerase type-Y family.

Functionally, involved in UV protection and mutation. This chain is Protein MucB (mucB), found in Escherichia coli.